The chain runs to 197 residues: Protein SPMIP2 (197 aa).

The segment at serine 161 to tyrosine 197 is disordered. A compositionally biased stretch (basic and acidic residues) spans proline 178–tyrosine 197.

The protein is Protein SPMIP2 (SPMIP2) of Bos taurus (Bovine).